Here is a 478-residue protein sequence, read N- to C-terminus: Probable cyclin-dependent kinase 9 (478 aa).

Polar residues predominate over residues 1 to 17 (MSAQNYHAGLHQSSTQR). The tract at residues 1–55 (MSAQNYHAGLHQSSTQRPPKRPNTEHAQEPPKRALIGGQTTPSSSGGGQTPNGTN) is disordered. The segment covering 22 to 32 (PNTEHAQEPPK) has biased composition (basic and acidic residues). One can recognise a Protein kinase domain in the interval 85 to 413 (YEKLNKIGQG…SDEAEDDIWF (329 aa)). Residues 91–99 (IGQGTFGEV) and lysine 114 contribute to the ATP site. The Proton acceptor role is filled by aspartate 217. The interval 444–478 (HANRGRHQNAQQRPNQQQARPSNAIPAGQYRDTIF) is disordered. Residues 451 to 464 (QNAQQRPNQQQARP) are compositionally biased toward low complexity.

Belongs to the protein kinase superfamily. CMGC Ser/Thr protein kinase family. CDC2/CDKX subfamily. Associates with cyclin-T (cit-1.1 or cit-1.2) to form P-TEFb.

The protein localises to the nucleus. The catalysed reaction is L-seryl-[protein] + ATP = O-phospho-L-seryl-[protein] + ADP + H(+). It catalyses the reaction L-threonyl-[protein] + ATP = O-phospho-L-threonyl-[protein] + ADP + H(+). It carries out the reaction [DNA-directed RNA polymerase] + ATP = phospho-[DNA-directed RNA polymerase] + ADP + H(+). Essential member of the cyclin-dependent kinase pair (CDK9/cyclin-T) complex, also called positive transcription elongation factor B (P-TEFb), which is proposed to facilitate the transition from abortive to production elongation by phosphorylating the CTD (C-terminal domain) of the large subunit of RNA polymerase II (RNAP II) and spt-5. This Caenorhabditis elegans protein is Probable cyclin-dependent kinase 9 (cdk-9).